The following is a 237-amino-acid chain: Ribonuclease 3 (237 aa).

One can recognise an RNase III domain in the interval 4–130 (IQILFQTLNI…LFGAIYLDLG (127 aa)). Glu45 serves as a coordination point for Mg(2+). Residue Asp49 is part of the active site. The Mg(2+) site is built by Asp116 and Glu119. Residue Glu119 is part of the active site. The DRBM domain maps to 154-222 (DFKTQLQEIV…AQQALSKVAK (69 aa)).

This sequence belongs to the ribonuclease III family. In terms of assembly, homodimer. It depends on Mg(2+) as a cofactor.

The protein resides in the cytoplasm. The enzyme catalyses Endonucleolytic cleavage to 5'-phosphomonoester.. Digests double-stranded RNA. Involved in the processing of primary rRNA transcript to yield the immediate precursors to the large and small rRNAs (23S and 16S). Processes some mRNAs, and tRNAs when they are encoded in the rRNA operon. Processes pre-crRNA and tracrRNA of type II CRISPR loci if present in the organism. The polypeptide is Ribonuclease 3 (Aster yellows witches'-broom phytoplasma (strain AYWB)).